A 495-amino-acid polypeptide reads, in one-letter code: UDP-N-acetylmuramoyl-L-alanyl-D-glutamate--2,6-diaminopimelate ligase (495 aa).

UDP-N-acetyl-alpha-D-muramoyl-L-alanyl-D-glutamate contacts are provided by residues L27, S29, and 44 to 46 (HQA). Residue 116 to 122 (GTNGKTT) participates in ATP binding. UDP-N-acetyl-alpha-D-muramoyl-L-alanyl-D-glutamate-binding positions include N157, 158–159 (TT), S185, Q191, and R193. The residue at position 225 (K225) is an N6-carboxylysine. Meso-2,6-diaminopimelate-binding positions include R390, 414–417 (DNPR), G465, and E469. Positions 414–417 (DNPR) match the Meso-diaminopimelate recognition motif motif.

The protein belongs to the MurCDEF family. MurE subfamily. Mg(2+) serves as cofactor. Carboxylation is probably crucial for Mg(2+) binding and, consequently, for the gamma-phosphate positioning of ATP.

The protein resides in the cytoplasm. The catalysed reaction is UDP-N-acetyl-alpha-D-muramoyl-L-alanyl-D-glutamate + meso-2,6-diaminopimelate + ATP = UDP-N-acetyl-alpha-D-muramoyl-L-alanyl-gamma-D-glutamyl-meso-2,6-diaminopimelate + ADP + phosphate + H(+). It participates in cell wall biogenesis; peptidoglycan biosynthesis. In terms of biological role, catalyzes the addition of meso-diaminopimelic acid to the nucleotide precursor UDP-N-acetylmuramoyl-L-alanyl-D-glutamate (UMAG) in the biosynthesis of bacterial cell-wall peptidoglycan. This Enterobacter sp. (strain 638) protein is UDP-N-acetylmuramoyl-L-alanyl-D-glutamate--2,6-diaminopimelate ligase.